Here is a 283-residue protein sequence, read N- to C-terminus: Poly(3-hydroxyalkanoate) depolymerase (283 aa).

The 224-residue stretch at 30-253 folds into the AB hydrolase-1 domain; sequence PLLIFNGIGA…IDDGHLFLIT (224 aa). The active-site Charge relay system is Ser-102.

The protein belongs to the AB hydrolase superfamily. Lipase family.

In terms of biological role, complements a mutant that does not degrade PHA; might be a lipase. The chain is Poly(3-hydroxyalkanoate) depolymerase from Ectopseudomonas oleovorans (Pseudomonas oleovorans).